The primary structure comprises 325 residues: Acetyl-coenzyme A carboxylase carboxyl transferase subunit alpha (325 aa).

In terms of domain architecture, CoA carboxyltransferase C-terminal spans 35-292 (EIEKLEARLA…DRVLRRSLKQ (258 aa)).

This sequence belongs to the AccA family. In terms of assembly, acetyl-CoA carboxylase is a heterohexamer composed of biotin carboxyl carrier protein (AccB), biotin carboxylase (AccC) and two subunits each of ACCase subunit alpha (AccA) and ACCase subunit beta (AccD).

Its subcellular location is the cytoplasm. The enzyme catalyses N(6)-carboxybiotinyl-L-lysyl-[protein] + acetyl-CoA = N(6)-biotinyl-L-lysyl-[protein] + malonyl-CoA. It functions in the pathway lipid metabolism; malonyl-CoA biosynthesis; malonyl-CoA from acetyl-CoA: step 1/1. In terms of biological role, component of the acetyl coenzyme A carboxylase (ACC) complex. First, biotin carboxylase catalyzes the carboxylation of biotin on its carrier protein (BCCP) and then the CO(2) group is transferred by the carboxyltransferase to acetyl-CoA to form malonyl-CoA. This chain is Acetyl-coenzyme A carboxylase carboxyl transferase subunit alpha, found in Geobacillus kaustophilus (strain HTA426).